Consider the following 338-residue polypeptide: DNA polymerase III subunit delta (338 aa).

This sequence belongs to the DNA polymerase HolA subunit family. In terms of assembly, DNA polymerase III contains a core (composed of alpha, epsilon and theta chains) that associates with a tau subunit. This core dimerizes to form the POLIII' complex. PolIII' associates with the gamma complex (composed of gamma, delta, delta', psi and chi chains) and with the beta chain to form the complete DNA polymerase III complex.

The enzyme catalyses DNA(n) + a 2'-deoxyribonucleoside 5'-triphosphate = DNA(n+1) + diphosphate. Its function is as follows. DNA polymerase III is a complex, multichain enzyme responsible for most of the replicative synthesis in bacteria. This DNA polymerase also exhibits 3' to 5' exonuclease activity. The delta subunit seems to interact with the gamma subunit to transfer the beta subunit on the DNA. This chain is DNA polymerase III subunit delta (holA), found in Buchnera aphidicola subsp. Schizaphis graminum (strain Sg).